The chain runs to 1248 residues: Bifunctional autolysin (1248 aa).

The first 29 residues, M1–A29, serve as a signal peptide directing secretion. The segment at G103 to V134 is disordered. Positions A191–K767 are N-acetylmuramoyl-L-alanine amidase. 7 GW domains span residues T435–A509, S511–K585, T604–A678, S680–A754, T776–L851, K853–A928, and A935–I1009. The interval A768–K1248 is endo-beta-N-acetylglucosaminidase.

It in the N-terminal section; belongs to the N-acetylmuramoyl-L-alanine amidase 2 family. This sequence in the C-terminal section; belongs to the glycosyl hydrolase 73 family. As to quaternary structure, oligomer; forms a ring structure at the cell surface which is important for efficient partitioning of daughter cells after cell division. Undergoes proteolytic processing to generate the two extracellular lytic enzymes, probably at the septal region on the cell surface.

Its subcellular location is the secreted. It carries out the reaction Hydrolyzes the link between N-acetylmuramoyl residues and L-amino acid residues in certain cell-wall glycopeptides.. It catalyses the reaction an N(4)-(oligosaccharide-(1-&gt;3)-[oligosaccharide-(1-&gt;6)]-beta-D-Man-(1-&gt;4)-beta-D-GlcNAc-(1-&gt;4)-alpha-D-GlcNAc)-L-asparaginyl-[protein] + H2O = an oligosaccharide-(1-&gt;3)-[oligosaccharide-(1-&gt;6)]-beta-D-Man-(1-&gt;4)-D-GlcNAc + N(4)-(N-acetyl-beta-D-glucosaminyl)-L-asparaginyl-[protein]. In terms of biological role, endohydrolysis of the di-N-acetylchitobiosyl unit in high-mannose glycopeptides and glycoproteins containing the -[(Man)5(GlcNAc)2]-Asn structure. One N-acetyl-D-glucosamine residue remains attached to the protein; the rest of the oligosaccharide is released intact. Cleaves the peptidoglycan connecting the daughter cells at the end of the cell division cycle, resulting in the separation of the two newly divided cells. Acts as an autolysin in penicillin-induced lysis. This chain is Bifunctional autolysin (atl), found in Staphylococcus aureus (strain Mu50 / ATCC 700699).